The following is a 419-amino-acid chain: Inositol-tetrakisphosphate 1-kinase (419 aa).

K18 is a 1D-myo-inositol 1,3,4-trisphosphate binding site. ATP-binding residues include R106 and K157. Residues 117-334 (EAYMKDDRIC…TGGAATEEVA (218 aa)) enclose the ATP-grasp domain. 1D-myo-inositol 1,3,4-trisphosphate is bound by residues H167 and K199. Residues 188–199 (QNFINHNAVLYK), S214, S232, and S236 contribute to the ATP site. Positions 281, 295, and 297 each coordinate Mg(2+). N297 serves as a coordination point for 1D-myo-inositol 1,3,4-trisphosphate. At K388 the chain carries N6-acetyllysine; by EP300 and CREBBP. S401 is subject to Phosphoserine. K415 carries the N6-acetyllysine; by EP300 and CREBBP modification.

It belongs to the ITPK1 family. In terms of assembly, monomer. Interacts with GPS1/COPS1. Mg(2+) serves as cofactor. In terms of processing, acetylation by EP300 and CREBBP destabilizes ITPK1, and down-regulates enzymatic activity. Deacetylated by SIRT1.

The catalysed reaction is 1D-myo-inositol 3,4,5,6-tetrakisphosphate + ATP = 1D-myo-inositol 1,3,4,5,6-pentakisphosphate + ADP + H(+). It carries out the reaction 1D-myo-inositol 1,3,4-trisphosphate + ATP = 1D-myo-inositol 1,3,4,5-tetrakisphosphate + ADP + H(+). The enzyme catalyses 1D-myo-inositol 1,3,4-trisphosphate + ATP = 1D-myo-inositol 1,3,4,6-tetrakisphosphate + ADP + H(+). It catalyses the reaction 1D-myo-inositol 3,4,6-trisphosphate + ATP = 1D-myo-inositol 1,3,4,6-tetrakisphosphate + ADP + H(+). The catalysed reaction is 1D-myo-inositol 1,3,4-trisphosphate + 1D-myo-inositol 1,3,4,5,6-pentakisphosphate = 1D-myo-inositol 3,4,5,6-tetrakisphosphate + 1D-myo-inositol 1,3,4,6-tetrakisphosphate. It carries out the reaction 1D-myo-inositol 1,3,4-trisphosphate + 1D-myo-inositol 1,3,4,5,6-pentakisphosphate = 1D-myo-inositol 3,4,5,6-tetrakisphosphate + 1D-myo-inositol 1,3,4,5-tetrakisphosphate. Kinase that can phosphorylate various inositol polyphosphate such as Ins(3,4,5,6)P4 or Ins(1,3,4)P3. Phosphorylates Ins(3,4,5,6)P4 at position 1 to form Ins(1,3,4,5,6)P5. This reaction is thought to have regulatory importance, since Ins(3,4,5,6)P4 is an inhibitor of plasma membrane Ca(2+)-activated Cl(-) channels, while Ins(1,3,4,5,6)P5 is not. Also phosphorylates Ins(1,3,4)P3 on O-5 and O-6 to form Ins(1,3,4,6)P4, an essential molecule in the hexakisphosphate (InsP6) pathway. Also acts as an inositol polyphosphate phosphatase that dephosphorylates Ins(1,3,4,5)P4 and Ins(1,3,4,6)P4 to Ins(1,3,4)P3, and Ins(1,3,4,5,6)P5 to Ins(3,4,5,6)P4. May also act as an isomerase that interconverts the inositol tetrakisphosphate isomers Ins(1,3,4,5)P4 and Ins(1,3,4,6)P4 in the presence of ADP and magnesium. Probably acts as the rate-limiting enzyme of the InsP6 pathway. Modifies TNF-alpha-induced apoptosis by interfering with the activation of TNFRSF1A-associated death domain. Plays an important role in MLKL-mediated necroptosis. Produces highly phosphorylated inositol phosphates such as inositolhexakisphosphate (InsP6) which bind to MLKL mediating the release of an N-terminal auto-inhibitory region leading to its activation. Essential for activated phospho-MLKL to oligomerize and localize to the cell membrane during necroptosis. This is Inositol-tetrakisphosphate 1-kinase from Mus musculus (Mouse).